The sequence spans 367 residues: Phosphoribosylaminoimidazole-succinocarboxamide synthase (367 aa).

Belongs to the SAICAR synthetase family.

It carries out the reaction 5-amino-1-(5-phospho-D-ribosyl)imidazole-4-carboxylate + L-aspartate + ATP = (2S)-2-[5-amino-1-(5-phospho-beta-D-ribosyl)imidazole-4-carboxamido]succinate + ADP + phosphate + 2 H(+). It participates in purine metabolism; IMP biosynthesis via de novo pathway; 5-amino-1-(5-phospho-D-ribosyl)imidazole-4-carboxamide from 5-amino-1-(5-phospho-D-ribosyl)imidazole-4-carboxylate: step 1/2. This is Phosphoribosylaminoimidazole-succinocarboxamide synthase from Shewanella halifaxensis (strain HAW-EB4).